A 120-amino-acid polypeptide reads, in one-letter code: ATP synthase subunit a (120 aa).

4 helical membrane passes run 2–22 (FFYS…YSYL), 29–49 (FFPF…VGIV), 59–79 (LNIT…LGFY), and 94–116 (IPFV…RSVG).

Belongs to the ATPase A chain family. F-type ATPases have 2 components, CF(1) - the catalytic core - and CF(0) - the membrane proton channel. CF(1) has five subunits: alpha(3), beta(3), gamma(1), delta(1), epsilon(1). CF(0) has three main subunits: a, b and c.

The protein resides in the mitochondrion inner membrane. In terms of biological role, mitochondrial membrane ATP synthase (F(1)F(0) ATP synthase or Complex V) produces ATP from ADP in the presence of a proton gradient across the membrane which is generated by electron transport complexes of the respiratory chain. F-type ATPases consist of two structural domains, F(1) - containing the extramembraneous catalytic core and F(0) - containing the membrane proton channel, linked together by a central stalk and a peripheral stalk. During catalysis, ATP synthesis in the catalytic domain of F(1) is coupled via a rotary mechanism of the central stalk subunits to proton translocation. Key component of the proton channel; it may play a direct role in the translocation of protons across the membrane. In Naegleria fowleri (Brain eating amoeba), this protein is ATP synthase subunit a (ATP6).